Consider the following 165-residue polypeptide: Ribosome maturation factor RimM (165 aa).

The region spanning 90–161 (PDTYYVSDLK…KIIIKPVGEW (72 aa)) is the PRC barrel domain.

This sequence belongs to the RimM family. As to quaternary structure, binds ribosomal protein uS19.

The protein resides in the cytoplasm. Functionally, an accessory protein needed during the final step in the assembly of 30S ribosomal subunit, possibly for assembly of the head region. Essential for efficient processing of 16S rRNA. May be needed both before and after RbfA during the maturation of 16S rRNA. It has affinity for free ribosomal 30S subunits but not for 70S ribosomes. This chain is Ribosome maturation factor RimM, found in Clostridium beijerinckii (strain ATCC 51743 / NCIMB 8052) (Clostridium acetobutylicum).